A 215-amino-acid polypeptide reads, in one-letter code: UPF0502 protein Shew_1617 (215 aa).

Belongs to the UPF0502 family.

The sequence is that of UPF0502 protein Shew_1617 from Shewanella loihica (strain ATCC BAA-1088 / PV-4).